We begin with the raw amino-acid sequence, 485 residues long: Palmitoyltransferase ZDHHC1 (485 aa).

The tract at residues 1–41 (MYKMNICNKPSNKTAPEKSVWTAPAQPSGPSPELQGQRSRR) is disordered. The Cytoplasmic segment spans residues 1–52 (MYKMNICNKPSNKTAPEKSVWTAPAQPSGPSPELQGQRSRRNGWSWPPHPLQ). The segment at 1-271 (MYKMNICNKP…GHLLCFHIYL (271 aa)) is mediates interaction with STING1. Residues 53–73 (IVAWLLYLFFAVIGFGILVPL) form a helical membrane-spanning segment. At 74–77 (LPHH) the chain is on the lumenal side. Residues 78–98 (WVPAGYACMGAIFAGHLVVHL) traverse the membrane as a helical segment. The Cytoplasmic portion of the chain corresponds to 99-185 (TAVSIDPADA…YRLFLHSVAS (87 aa)). Residues 134–184 (LHCNLCNVDVSARSKHCSACNKCVCGFDHHCKWLNNCVGERNYRLFLHSVA) form the DHHC domain. The active-site S-palmitoyl cysteine intermediate is the Cys-164. The chain crosses the membrane as a helical span at residues 186-206 (ALLGVLLLVLVATYVFVEFFV). Residues 207-241 (NPMRLRTNRHFEVLKNHTDVWFVFLPAAPVETQAP) are Lumenal-facing. The helical transmembrane segment at 242–262 (AILALAALLILLGLLSTALLG) threads the bilayer. Residues 263 to 485 (HLLCFHIYLM…RGRRVRPPFS (223 aa)) are Cytoplasmic-facing. Disordered stretches follow at residues 324–358 (EPPG…GPPV) and 462–485 (LWPP…PPFS). The segment covering 475-485 (WRGRRVRPPFS) has biased composition (basic residues).

The protein belongs to the DHHC palmitoyltransferase family. As to quaternary structure, interacts with STING1; ZDHHC1 constitutively interacts with STING1 and in presence of DNA viruses activates it by promoting its cGAMP-induced oligomerization and the recruitment of downstream signaling components. As to expression, widely expressed with significant expression in heart, brain, placenta, lung, liver, kidney, testis, thymus and small intestine. Expressed at lower levels in adult pancreas and lung.

Its subcellular location is the endosome membrane. The protein resides in the endoplasmic reticulum membrane. The protein localises to the golgi apparatus. The enzyme catalyses L-cysteinyl-[protein] + hexadecanoyl-CoA = S-hexadecanoyl-L-cysteinyl-[protein] + CoA. In terms of biological role, palmitoyltransferase that catalyzes the addition of palmitate onto various protein substrates, such as NCDN and NLRP3. Has a palmitoyltransferase activity toward NCDN and regulates NCDN association with endosome membranes through this palmitoylation. Acts as an activator of the NLRP3 inflammasome by mediating palmitoylation of 'Cys-130' and 'Cys-958' of NLRP3, thereby promoting NLRP3 phosphorylation and activation by NEK7. Also has a palmitoyltransferase activity-independent function in DNA virus-triggered and CGAS-mediated innate immune response. Functions as an activator of STING1 by promoting its cGAMP-induced oligomerization and the recruitment of downstream signaling components. In Homo sapiens (Human), this protein is Palmitoyltransferase ZDHHC1.